The primary structure comprises 341 residues: Trans-3-hydroxy-L-proline dehydratase (341 aa).

Serine 90 functions as the Proton acceptor in the catalytic mechanism. Substrate-binding positions include 91–92 (GS), aspartate 252, and 257–258 (GT).

It belongs to the proline racemase family.

It catalyses the reaction trans-3-hydroxy-L-proline = 1-pyrroline-2-carboxylate + H2O. In terms of biological role, catalyzes the dehydration of trans-3-hydroxy-L-proline (t3LHyp) to Delta(1)-pyrroline-2-carboxylate (Pyr2C). May be involved in a degradation pathway of t3LHyp, which would allow L.aggregata to grow on t3LHyp as a sole carbon source. Displays neither proline racemase activity nor 4-hydroxyproline 2-epimerase activity. This is Trans-3-hydroxy-L-proline dehydratase from Roseibium aggregatum (strain ATCC 25650 / DSM 13394 / JCM 20685 / NBRC 16684 / NCIMB 2208 / IAM 12614 / B1) (Stappia aggregata).